A 41-amino-acid polypeptide reads, in one-letter code: U15-myrmicitoxin-Tb1b (41 aa).

The first 25 residues, 1–25, serve as a signal peptide directing secretion; sequence MKIVKLITIFAMIATLMVTVTNGEA. Histidine 40 carries the histidine amide modification.

Expressed by the venom gland.

It is found in the secreted. Venom protein with unknown function. Does not induce paralysis when a high dose is administered by intrathoracic injection into the blowfly Lucilia caesar. This is U15-myrmicitoxin-Tb1b from Tetramorium bicarinatum (Tramp ant).